Consider the following 383-residue polypeptide: Smad nuclear-interacting protein 1 (383 aa).

Positions 1–10 (MKAGKSERER) are enriched in basic and acidic residues. Residues 1-209 (MKAGKSERER…NRSKEVPVKE (209 aa)) form a disordered region. Serine 18 bears the Phosphoserine mark. Residue lysine 28 forms a Glycyl lysine isopeptide (Lys-Gly) (interchain with G-Cter in SUMO); alternate linkage. A Glycyl lysine isopeptide (Lys-Gly) (interchain with G-Cter in SUMO1); alternate cross-link involves residue lysine 28. Residue lysine 28 forms a Glycyl lysine isopeptide (Lys-Gly) (interchain with G-Cter in SUMO2); alternate linkage. Over residues 28–43 (KQERLSPEPVAHRRPD) the composition is skewed to basic and acidic residues. Serine 33, serine 48, and serine 50 each carry phosphoserine. The segment covering 44-56 (APAASLSPPAAEP) has biased composition (low complexity). The segment covering 59 to 90 (SGHRGSRARSPAKKKSKSSGRRSKSPRTKRSQ) has biased composition (basic residues). Serine 91 is subject to Phosphoserine. Composition is skewed to basic and acidic residues over residues 99 to 134 (VKQEREDHPRRGREDRQHREPSEQEHRRARNSERDR) and 143 to 159 (RSSDERPVSGQDRDRDS). Lysine 100 participates in a covalent cross-link: Glycyl lysine isopeptide (Lys-Gly) (interchain with G-Cter in SUMO2). A Phosphoserine modification is found at serine 145. The stretch at 153–194 (QDRDRDSQNLQAQEEERDFHNARRREHRQQNESAGSEAQEVI) forms a coiled coil. Lysine 210 is covalently cross-linked (Glycyl lysine isopeptide (Lys-Gly) (interchain with G-Cter in SUMO2)). In terms of domain architecture, FHA spans 268–331 (YLLGRHRRIA…NGTFLNNKRI (64 aa)). Residues 359-369 (ESSDTSELDRK) show a composition bias toward basic and acidic residues. The interval 359–383 (ESSDTSELDRKEDEDDEEEEMVSDS) is disordered. Residues 370–383 (EDEDDEEEEMVSDS) show a composition bias toward acidic residues. Serine 381 is modified (phosphoserine).

As to quaternary structure, component of activated spliceosome complexes. Binds SMAD4 and CREBBP/EP300. Component of the minor spliceosome, which splices U12-type introns. Binds the SMAD1/OAZ1/PSMB4 complex. Interacts with DROSHA and SMARCA4. Component of the SNARP complex which consists at least of SNIP1, SNW1, THRAP3, BCLAF1 and PNN. In terms of processing, degraded by the proteasome upon binding to the SMAD1/OAZ1/PSMB4 complex.

It is found in the nucleus. Required for pre-mRNA splicing as component of the spliceosome. As a component of the minor spliceosome, involved in the splicing of U12-type introns in pre-mRNAs. Down-regulates NF-kappa-B signaling by competing with RELA for CREBBP/EP300 binding. Involved in the microRNA (miRNA) biogenesis. May be involved in cyclin-D1/CCND1 mRNA stability through the SNARP complex which associates with both the 3'end of the CCND1 gene and its mRNA. The sequence is that of Smad nuclear-interacting protein 1 (Snip1) from Mus musculus (Mouse).